The primary structure comprises 368 residues: Phosphoserine aminotransferase (368 aa).

Residue arginine 44 participates in L-glutamate binding. Residues 78 to 79 (AT), tryptophan 104, threonine 157, aspartate 179, and glutamine 202 each bind pyridoxal 5'-phosphate. Lysine 203 carries the post-translational modification N6-(pyridoxal phosphate)lysine. A pyridoxal 5'-phosphate-binding site is contributed by 244–245 (NT).

It belongs to the class-V pyridoxal-phosphate-dependent aminotransferase family. SerC subfamily. In terms of assembly, homodimer. Pyridoxal 5'-phosphate serves as cofactor.

Its subcellular location is the cytoplasm. It catalyses the reaction O-phospho-L-serine + 2-oxoglutarate = 3-phosphooxypyruvate + L-glutamate. It carries out the reaction 4-(phosphooxy)-L-threonine + 2-oxoglutarate = (R)-3-hydroxy-2-oxo-4-phosphooxybutanoate + L-glutamate. Its pathway is amino-acid biosynthesis; L-serine biosynthesis; L-serine from 3-phospho-D-glycerate: step 2/3. The protein operates within cofactor biosynthesis; pyridoxine 5'-phosphate biosynthesis; pyridoxine 5'-phosphate from D-erythrose 4-phosphate: step 3/5. Its function is as follows. Catalyzes the reversible conversion of 3-phosphohydroxypyruvate to phosphoserine and of 3-hydroxy-2-oxo-4-phosphonooxybutanoate to phosphohydroxythreonine. This is Phosphoserine aminotransferase from Neisseria meningitidis serogroup C / serotype 2a (strain ATCC 700532 / DSM 15464 / FAM18).